The chain runs to 695 residues: Follicle-stimulating hormone receptor (695 aa).

Positions 1 to 17 (MTFLLVSLLAFLSLGSG) are cleaved as a signal peptide. 2 disulfide bridges follow: C18-C25 and C23-C32. One can recognise an LRRNT domain in the interval 18–46 (CHHRICHCWHRVFLCQESKVTEIPSDLPR). Topologically, residues 18 to 366 (CHHRICHCWH…EDIMGYDILR (349 aa)) are extracellular. LRR repeat units follow at residues 49 to 72 (VELRFVLTKLRVIPKGAFSGFGDL), 73 to 97 (EKIEISQNDVLEVIEANVFFNLSKL), 98 to 118 (HEIRIEKANNLLYIDTDAFQN), 119 to 143 (LPNLRYLLISNTGIKHFPAVHKIQS), 144 to 169 (LQKVLLDIQDNINIHTVERNSFMGLS), 170 to 192 (FESMILWLNKNGIQEIHNCAFNG), 193 to 216 (TQLDELNLSDNINLEELPNDVFQG), 217 to 240 (ASGPVILDISRTRIHSLPSYGLEN), and 241 to 259 (IKKLRAKSTYNLKKLPSLD). N-linked (GlcNAc...) asparagine glycosylation is present at N93. 2 N-linked (GlcNAc...) asparagine glycosylation sites follow: N191 and N199. Intrachain disulfides connect C275–C346, C276–C292, C276–C356, and C292–C338. The N-linked (GlcNAc...) asparagine glycan is linked to N293. The residue at position 335 (Y335) is a Sulfotyrosine. Residues 367-387 (VLIWFISILAITGNIIVLMIL) form a helical membrane-spanning segment. The Cytoplasmic portion of the chain corresponds to 388–398 (ITSQYKLTVPR). A helical transmembrane segment spans residues 399–419 (FLMCNLAFADLCIGIYLLLIA). Over 420–444 (SVDIYTKSQYHNYAIDWQTGAGCDA) the chain is Extracellular. Residues 445-465 (AGFFTVFASELSVYTLTVITL) traverse the membrane as a helical segment. Topologically, residues 466–487 (ERWHTITHAMQLECKVQLRHAA) are cytoplasmic. The helical transmembrane segment at 488-508 (IIMLLGWIFAFMVALFPIFGI) threads the bilayer. Topologically, residues 509–528 (SSYMKVSICLPMDIDSPLSQ) are extracellular. The helical transmembrane segment at 529–550 (LYVMSLLVLNVLAFVVICCCYA) threads the bilayer. Residues 551-573 (HIYLTVRNPNIVSSSSDTKIAKR) are Cytoplasmic-facing. A helical membrane pass occupies residues 574–594 (MAMLIFTDFLCMAPISFFAIS). The Extracellular segment spans residues 595 to 608 (ASLKVPLITVSKSK). The helical transmembrane segment at 609 to 629 (ILLVLFYPINSCANPFLYAIF) threads the bilayer. The Cytoplasmic segment spans residues 630–695 (TKNFRRDFFI…LIPLRHLAKN (66 aa)).

The protein belongs to the G-protein coupled receptor 1 family. FSH/LSH/TSH subfamily. As to quaternary structure, homotrimer. Functions as a homotrimer binding the FSH hormone heterodimer composed of CGA and FSHB. Interacts with ARRB2. Interacts with APPL2; interaction is independent of follicle stimulating hormone stimulation. In terms of processing, N-glycosylated; indirectly required for FSH-binding, possibly via a conformational change that allows high affinity binding of hormone. Post-translationally, sulfated.

The protein localises to the cell membrane. Functionally, g protein-coupled receptor for follitropin, the follicle-stimulating hormone. Through cAMP production activates the downstream PI3K-AKT and ERK1/ERK2 signaling pathways. The polypeptide is Follicle-stimulating hormone receptor (FSHR) (Felis catus (Cat)).